Consider the following 124-residue polypeptide: Small ribosomal subunit protein uS12 (124 aa).

Residues 1–24 (MTTINQLVRKPRQATTYKSASPAL) are disordered. 3-methylthioaspartic acid is present on aspartate 89.

The protein belongs to the universal ribosomal protein uS12 family. As to quaternary structure, part of the 30S ribosomal subunit. Contacts proteins S8 and S17. May interact with IF1 in the 30S initiation complex.

With S4 and S5 plays an important role in translational accuracy. In terms of biological role, interacts with and stabilizes bases of the 16S rRNA that are involved in tRNA selection in the A site and with the mRNA backbone. Located at the interface of the 30S and 50S subunits, it traverses the body of the 30S subunit contacting proteins on the other side and probably holding the rRNA structure together. The combined cluster of proteins S8, S12 and S17 appears to hold together the shoulder and platform of the 30S subunit. This is Small ribosomal subunit protein uS12 from Xanthomonas axonopodis pv. citri (strain 306).